Consider the following 278-residue polypeptide: Small ribosomal subunit protein uS3 (278 aa).

The KH type-2 domain occupies 39–107 (LRKAIAKKYV…KVQLNIVEIS (69 aa)). Residues 244–278 (AKPKRVTKKAEAEASAEEKPKRAAKKAENITKEEE) are disordered. A compositionally biased stretch (basic and acidic residues) spans 251 to 278 (KKAEAEASAEEKPKRAAKKAENITKEEE).

This sequence belongs to the universal ribosomal protein uS3 family. As to quaternary structure, part of the 30S ribosomal subunit. Forms a tight complex with proteins S10 and S14.

In terms of biological role, binds the lower part of the 30S subunit head. Binds mRNA in the 70S ribosome, positioning it for translation. The sequence is that of Small ribosomal subunit protein uS3 from Dehalococcoides mccartyi (strain ATCC BAA-2266 / KCTC 15142 / 195) (Dehalococcoides ethenogenes (strain 195)).